The following is a 430-amino-acid chain: MATSAGKLRTLYSAHSSLSSLPPSARPTLQLATLRSYATTTPHDSPIGNTSNTPPTVKRPATAFKDKLNAGPAFSDFVSGKKDEPLDPAEAYALKTALVGPPGRKKEITRLPPWLKTAIPDSSNYKRIKNDLRGLNLHTVCEEARCPNIADCWGGSSKSAATATIMLMGDTCTRGCRFCSVKTSNKPPPLDPHEPDNTAEALSRWGLGYVVLTSVDRDDLADGGARHFAETVMKIKQKAPNILVECLTGDYAGDLDMVALVANSGLDVFAHNVETVEALTPFVRDRRASFQQSLRVLKAAKAAKPELITKTSLMLGLGETEAQLWDALRALRAINVDVVTFGQYMRPTKRHMAVHEYVRPDVFDLWKERALEMGFLYCASGPLVRSSYKAGEAFIENVLKKRRGENAGSVNEKVTTSENVKKLVAGEAMM.

The transit peptide at methionine 1–tyrosine 37 directs the protein to the mitochondrion. Residues threonine 39–proline 55 show a composition bias toward polar residues. Residues threonine 39–lysine 58 form a disordered region. Residues cysteine 141, cysteine 146, cysteine 152, cysteine 172, cysteine 176, cysteine 179, and serine 387 each coordinate [4Fe-4S] cluster. The Radical SAM core domain maps to glycine 155 to leucine 376.

It belongs to the radical SAM superfamily. Lipoyl synthase family. [4Fe-4S] cluster serves as cofactor.

It is found in the mitochondrion. The catalysed reaction is [[Fe-S] cluster scaffold protein carrying a second [4Fe-4S](2+) cluster] + N(6)-octanoyl-L-lysyl-[protein] + 2 oxidized [2Fe-2S]-[ferredoxin] + 2 S-adenosyl-L-methionine + 4 H(+) = [[Fe-S] cluster scaffold protein] + N(6)-[(R)-dihydrolipoyl]-L-lysyl-[protein] + 4 Fe(3+) + 2 hydrogen sulfide + 2 5'-deoxyadenosine + 2 L-methionine + 2 reduced [2Fe-2S]-[ferredoxin]. Its pathway is protein modification; protein lipoylation via endogenous pathway; protein N(6)-(lipoyl)lysine from octanoyl-[acyl-carrier-protein]: step 2/2. Catalyzes the radical-mediated insertion of two sulfur atoms into the C-6 and C-8 positions of the octanoyl moiety bound to the lipoyl domains of lipoate-dependent enzymes, thereby converting the octanoylated domains into lipoylated derivatives. The polypeptide is Lipoyl synthase, mitochondrial (Ajellomyces capsulatus (strain G186AR / H82 / ATCC MYA-2454 / RMSCC 2432) (Darling's disease fungus)).